The sequence spans 94 residues: Pyrimidine/purine nucleoside phosphorylase (94 aa).

Belongs to the nucleoside phosphorylase PpnP family.

It carries out the reaction a purine D-ribonucleoside + phosphate = a purine nucleobase + alpha-D-ribose 1-phosphate. The enzyme catalyses adenosine + phosphate = alpha-D-ribose 1-phosphate + adenine. It catalyses the reaction cytidine + phosphate = cytosine + alpha-D-ribose 1-phosphate. The catalysed reaction is guanosine + phosphate = alpha-D-ribose 1-phosphate + guanine. It carries out the reaction inosine + phosphate = alpha-D-ribose 1-phosphate + hypoxanthine. The enzyme catalyses thymidine + phosphate = 2-deoxy-alpha-D-ribose 1-phosphate + thymine. It catalyses the reaction uridine + phosphate = alpha-D-ribose 1-phosphate + uracil. The catalysed reaction is xanthosine + phosphate = alpha-D-ribose 1-phosphate + xanthine. Catalyzes the phosphorolysis of diverse nucleosides, yielding D-ribose 1-phosphate and the respective free bases. Can use uridine, adenosine, guanosine, cytidine, thymidine, inosine and xanthosine as substrates. Also catalyzes the reverse reactions. In Pectobacterium carotovorum subsp. carotovorum (strain PC1), this protein is Pyrimidine/purine nucleoside phosphorylase.